A 494-amino-acid polypeptide reads, in one-letter code: Maintenance of mitochondrial morphology protein 1 (494 aa).

Residues 1–22 (MSSQPGDPATLPAQSSLSFTQG) lie on the Lumenal side of the membrane. The chain crosses the membrane as a helical span at residues 23 to 43 (FLLGQLSVVLVLAAFIKFFIF). Residues 44-494 (GEAPPPPSRG…GSLPEAVTPG (451 aa)) are Cytoplasmic-facing. Disordered regions lie at residues 50 to 98 (PSRG…SSST), 274 to 330 (PPLD…KSNV), 398 to 426 (VRTG…ARHE), and 449 to 494 (VASR…VTPG). Positions 54-64 (LSHRSATHRRS) are enriched in basic residues. Composition is skewed to polar residues over residues 65-76 (NSIYSNSPQEAG) and 85-98 (STSN…SSST). The region spanning 130–387 (QPESLDWFNV…EPRVQVVGLP (258 aa)) is the SMP-LTD domain. Residues 274–286 (PPLDTPSHSPSPP) show a composition bias toward pro residues. 2 stretches are compositionally biased toward polar residues: residues 406–416 (TASNGPRSTVS) and 466–477 (RSMTRQESSGDL).

The protein belongs to the MMM1 family. In terms of assembly, homodimer. Component of the ER-mitochondria encounter structure (ERMES) or MDM complex, composed of mmm1, mdm10, mdm12 and mdm34. A mmm1 homodimer associates with one molecule of mdm12 on each side in a pairwise head-to-tail manner, and the SMP-LTD domains of mmm1 and mdm12 generate a continuous hydrophobic tunnel for phospholipid trafficking.

The protein resides in the endoplasmic reticulum membrane. Functionally, component of the ERMES/MDM complex, which serves as a molecular tether to connect the endoplasmic reticulum (ER) and mitochondria. Components of this complex are involved in the control of mitochondrial shape and protein biogenesis, and function in nonvesicular lipid trafficking between the ER and mitochondria. The mdm12-mmm1 subcomplex functions in the major beta-barrel assembly pathway that is responsible for biogenesis of all outer membrane beta-barrel proteins, and acts in a late step after the SAM complex. The mdm10-mdm12-mmm1 subcomplex further acts in the TOM40-specific pathway after the action of the mdm12-mmm1 complex. Essential for establishing and maintaining the structure of mitochondria and maintenance of mtDNA nucleoids. This is Maintenance of mitochondrial morphology protein 1 from Aspergillus clavatus (strain ATCC 1007 / CBS 513.65 / DSM 816 / NCTC 3887 / NRRL 1 / QM 1276 / 107).